Reading from the N-terminus, the 56-residue chain is uncharacterized protein (56 aa).

4Fe-4S ferredoxin-type domains are found at residues 2 to 28 (VKIDYKKCGYCGACVGVCEKLAINLIE) and 29 to 56 (HIIVIDEKKCNNCKLCTIVCPLNALEGE). 8 residues coordinate [4Fe-4S] cluster: cysteine 9, cysteine 12, cysteine 15, cysteine 19, cysteine 38, cysteine 41, cysteine 44, and cysteine 48.

It depends on [4Fe-4S] cluster as a cofactor.

Functionally, ferredoxins are iron-sulfur proteins that transfer electrons in a wide variety of metabolic reactions. This is an uncharacterized protein from Methanocaldococcus jannaschii (strain ATCC 43067 / DSM 2661 / JAL-1 / JCM 10045 / NBRC 100440) (Methanococcus jannaschii).